The chain runs to 442 residues: Pentatricopeptide repeat-containing protein At2g27800, mitochondrial (442 aa).

The N-terminal 67 residues, 1–67 (MSATRSTFLG…SFLPSIHVRF (67 aa)), are a transit peptide targeting the mitochondrion. PPR repeat units follow at residues 206–236 (NENL…MVTS), 244–286 (TIRT…GIEP), 287–322 (DVFA…DCEP), 323–357 (NSFT…GFVP), 358–392 (NGKS…GRVV), and 393–427 (DFIS…QLVD).

The protein belongs to the PPR family. P subfamily.

It is found in the mitochondrion. This is Pentatricopeptide repeat-containing protein At2g27800, mitochondrial from Arabidopsis thaliana (Mouse-ear cress).